A 280-amino-acid chain; its full sequence is Large ribosomal subunit protein uL2 (280 aa).

Disordered regions lie at residues 1–58 (MAIR…GGGH) and 226–280 (MNPV…KHGR). Basic residues-rich tracts occupy residues 37-58 (LHGHGGRNAHGRITTRHKGGGH) and 268-280 (IVRRRRTGKKHGR).

Belongs to the universal ribosomal protein uL2 family. Part of the 50S ribosomal subunit. Forms a bridge to the 30S subunit in the 70S ribosome.

Its function is as follows. One of the primary rRNA binding proteins. Required for association of the 30S and 50S subunits to form the 70S ribosome, for tRNA binding and peptide bond formation. It has been suggested to have peptidyltransferase activity; this is somewhat controversial. Makes several contacts with the 16S rRNA in the 70S ribosome. The protein is Large ribosomal subunit protein uL2 of Mycobacterium avium (strain 104).